Here is a 498-residue protein sequence, read N- to C-terminus: L-amino acid oxidase (498 aa).

The N-terminal stretch at 1-11 (SLLFLAAVGSC) is a signal peptide. A disulfide bond links Cys21 and Cys184. Residues 54-55 (MS), 74-75 (EA), 74-78 (EASER), Arg82, and 98-101 (GPMR) each bind FAD. Arg101 is a binding site for substrate. Asn183 carries N-linked (GlcNAc...) asparagine glycosylation. His234 serves as a coordination point for substrate. An FAD-binding site is contributed by Val272. Cys342 and Cys423 are disulfide-bonded. Residue Tyr383 coordinates substrate. FAD-binding positions include Glu468, 475-480 (GWIDST), and 476-480 (WIDST). A substrate-binding site is contributed by 475-476 (GW).

Belongs to the flavin monoamine oxidase family. FIG1 subfamily. Homodimer; non-covalently linked. Requires FAD as cofactor. N-glycosylated. Contains 18.73% carbohydrates. As to expression, expressed by the venom gland.

Its subcellular location is the secreted. The enzyme catalyses an L-alpha-amino acid + O2 + H2O = a 2-oxocarboxylate + H2O2 + NH4(+). It catalyses the reaction L-leucine + O2 + H2O = 4-methyl-2-oxopentanoate + H2O2 + NH4(+). With respect to regulation, strongly inhibited by glutathione, and moderately inhibited by PMSF, acetate iodine and glutamic acid. Is also inhibited by Zn(2+) ions, but not by Ca(2+), Mg(2+) and Mn(2+). Functionally, catalyzes an oxidative deamination of predominantly hydrophobic and aromatic L-amino acids, thus producing hydrogen peroxide that may contribute to the diverse toxic effects of this enzyme. This enzyme shows activity on L-Leu. This enzyme inhibits platelet aggregation in human platelet rich plasma induced by ADP (IC(50)=3.2 mg/mL), and shows antibacterial activities on both Gram-positive and Gram-negative bacteria (P.aeruginosa, V.cholerae, S.aureus, E.faecalis and E.coli). These two effects are due to hydrogen peroxide, since they are inhibited by catalase. It also induces edema in mouse paw pads but does not show hemolytic activity. This protein may also have activities in hemorrhage, and apoptosis. The chain is L-amino acid oxidase from Bothrops pictus (Desert lancehead).